The chain runs to 118 residues: MARIAGINIPDHKHTVIALTSIFGIGKTRSQAICAATGIAEDVKISELSEEQIDKLRDEVAKFVVEGDLRREVTLSIKRLMDLGTYRGLRHRRGLPVRGQRTKTNARTRKGPRKPIKK.

The segment at 92 to 118 (RRGLPVRGQRTKTNARTRKGPRKPIKK) is disordered.

Belongs to the universal ribosomal protein uS13 family. In terms of assembly, part of the 30S ribosomal subunit. Forms a loose heterodimer with protein S19. Forms two bridges to the 50S subunit in the 70S ribosome.

Located at the top of the head of the 30S subunit, it contacts several helices of the 16S rRNA. In the 70S ribosome it contacts the 23S rRNA (bridge B1a) and protein L5 of the 50S subunit (bridge B1b), connecting the 2 subunits; these bridges are implicated in subunit movement. Contacts the tRNAs in the A and P-sites. The polypeptide is Small ribosomal subunit protein uS13 (Pectobacterium carotovorum subsp. carotovorum (strain PC1)).